The primary structure comprises 166 residues: Large ribosomal subunit protein uL10 (166 aa).

It belongs to the universal ribosomal protein uL10 family. In terms of assembly, part of the ribosomal stalk of the 50S ribosomal subunit. The N-terminus interacts with L11 and the large rRNA to form the base of the stalk. The C-terminus forms an elongated spine to which L12 dimers bind in a sequential fashion forming a multimeric L10(L12)X complex.

In terms of biological role, forms part of the ribosomal stalk, playing a central role in the interaction of the ribosome with GTP-bound translation factors. This is Large ribosomal subunit protein uL10 from Flavobacterium psychrophilum (strain ATCC 49511 / DSM 21280 / CIP 103535 / JIP02/86).